Consider the following 614-residue polypeptide: Zinc finger protein 276 (614 aa).

Positions 1–46 are disordered; that stretch reads MKRDRLGRFLSPGIARQRGGSGGGCGSGRTRGRPSRSGGTSADGAA. Gly residues predominate over residues 19-29; the sequence is GGSGGGCGSGR. In terms of domain architecture, ZAD spans 78–164; it reads GHCRLCHGKF…LQRVNVSPAG (87 aa). The Zn(2+) site is built by Cys-80, Cys-83, Cys-137, and Cys-140. The disordered stretch occupies residues 271 to 422; it reads RLAQNSESNP…PGPKPGWKKK (152 aa). 2 stretches are compositionally biased toward polar residues: residues 272 to 282 and 291 to 302; these read LAQNSESNPTG and RETQVGSETKTL. The segment covering 357–369 has biased composition (acidic residues); that stretch reads SDLSEGDFLSEDE. Residues 386–408 are compositionally biased toward basic and acidic residues; that stretch reads YPEKKVSGKKSEGREAKRPEEPK. The segment covering 409–422 has biased composition (basic residues); that stretch reads IRKKPGPKPGWKKK. 5 consecutive C2H2-type zinc fingers follow at residues 434 to 458, 465 to 490, 496 to 518, 524 to 546, and 554 to 577; these read YKCP…IKEH, RPCP…KLIH, YICD…QMRH, LQCE…MTKH, and FACD…SMVH. Positions 588–614 are disordered; sequence PLEAEPPPGPLSPSGTMEGQAVKPEPT.

Found in all the examined tissues, with highest levels in kidney, liver, lung, and spleen.

Its subcellular location is the nucleus. The protein resides in the chromosome. It localises to the centromere. It is found in the kinetochore. Functionally, may be involved in transcriptional regulation. The polypeptide is Zinc finger protein 276 (Znf276) (Mus musculus (Mouse)).